We begin with the raw amino-acid sequence, 213 residues long: Na(+)-translocating NADH-quinone reductase subunit D (213 aa).

6 helical membrane-spanning segments follow: residues 21–41, 42–62, 77–97, 101–121, 131–151, and 183–203; these read PLIA…VKTA, ITMG…VSLL, IIIS…FFNI, LSVF…AESL, FLDG…VSII, and FGLM…IWVV.

It belongs to the NqrDE/RnfAE family. As to quaternary structure, composed of six subunits; NqrA, NqrB, NqrC, NqrD, NqrE and NqrF.

The protein localises to the cell inner membrane. It catalyses the reaction a ubiquinone + n Na(+)(in) + NADH + H(+) = a ubiquinol + n Na(+)(out) + NAD(+). Functionally, NQR complex catalyzes the reduction of ubiquinone-1 to ubiquinol by two successive reactions, coupled with the transport of Na(+) ions from the cytoplasm to the periplasm. NqrA to NqrE are probably involved in the second step, the conversion of ubisemiquinone to ubiquinol. The chain is Na(+)-translocating NADH-quinone reductase subunit D from Chlamydia felis (strain Fe/C-56) (Chlamydophila felis).